Here is a 526-residue protein sequence, read N- to C-terminus: Peptide chain release factor 3 (526 aa).

The tr-type G domain occupies 8–277 (NKRRTFAIIS…GLTEWAPKPQ (270 aa)). GTP is bound by residues 17-24 (SHPDAGKT), 85-89 (DTPGH), and 139-142 (NKLD).

This sequence belongs to the TRAFAC class translation factor GTPase superfamily. Classic translation factor GTPase family. PrfC subfamily.

Its subcellular location is the cytoplasm. Increases the formation of ribosomal termination complexes and stimulates activities of RF-1 and RF-2. It binds guanine nucleotides and has strong preference for UGA stop codons. It may interact directly with the ribosome. The stimulation of RF-1 and RF-2 is significantly reduced by GTP and GDP, but not by GMP. In Actinobacillus pleuropneumoniae serotype 7 (strain AP76), this protein is Peptide chain release factor 3.